A 155-amino-acid polypeptide reads, in one-letter code: S-ribosylhomocysteine lyase (155 aa).

Positions 58, 62, and 125 each coordinate Fe cation.

The protein belongs to the LuxS family. Homodimer. Requires Fe cation as cofactor.

It catalyses the reaction S-(5-deoxy-D-ribos-5-yl)-L-homocysteine = (S)-4,5-dihydroxypentane-2,3-dione + L-homocysteine. Its function is as follows. Involved in the synthesis of autoinducer 2 (AI-2) which is secreted by bacteria and is used to communicate both the cell density and the metabolic potential of the environment. The regulation of gene expression in response to changes in cell density is called quorum sensing. Catalyzes the transformation of S-ribosylhomocysteine (RHC) to homocysteine (HC) and 4,5-dihydroxy-2,3-pentadione (DPD). This is S-ribosylhomocysteine lyase from Helicobacter pylori (strain P12).